The chain runs to 293 residues: 3-methyl-2-oxobutanoate hydroxymethyltransferase (293 aa).

Positions 1-26 (MTQAPVTAGTPYGTIPPASPLPQRRP) are disordered. Asp68 and Asp111 together coordinate Mg(2+). Residues 68 to 69 (DS), Asp111, and Lys140 contribute to the 3-methyl-2-oxobutanoate site. Glu142 provides a ligand contact to Mg(2+). Glu209 (proton acceptor) is an active-site residue.

Belongs to the PanB family. In terms of assembly, homodecamer; pentamer of dimers. Mg(2+) serves as cofactor.

The protein localises to the cytoplasm. It carries out the reaction 3-methyl-2-oxobutanoate + (6R)-5,10-methylene-5,6,7,8-tetrahydrofolate + H2O = 2-dehydropantoate + (6S)-5,6,7,8-tetrahydrofolate. The protein operates within cofactor biosynthesis; (R)-pantothenate biosynthesis; (R)-pantoate from 3-methyl-2-oxobutanoate: step 1/2. In terms of biological role, catalyzes the reversible reaction in which hydroxymethyl group from 5,10-methylenetetrahydrofolate is transferred onto alpha-ketoisovalerate to form ketopantoate. The chain is 3-methyl-2-oxobutanoate hydroxymethyltransferase from Delftia acidovorans (strain DSM 14801 / SPH-1).